The following is a 670-amino-acid chain: tRNA 5-methylaminomethyl-2-thiouridine biosynthesis bifunctional protein MnmC (670 aa).

The tract at residues 1–242 (MTFSVQHAEI…KRECLSGLKI (242 aa)) is tRNA (mnm(5)s(2)U34)-methyltransferase. The interval 269 to 670 (IGGGIASFCA…KKWLKGSKVE (402 aa)) is FAD-dependent cmnm(5)s(2)U34 oxidoreductase.

It in the N-terminal section; belongs to the methyltransferase superfamily. tRNA (mnm(5)s(2)U34)-methyltransferase family. In the C-terminal section; belongs to the DAO family. The cofactor is FAD.

The protein resides in the cytoplasm. The catalysed reaction is 5-aminomethyl-2-thiouridine(34) in tRNA + S-adenosyl-L-methionine = 5-methylaminomethyl-2-thiouridine(34) in tRNA + S-adenosyl-L-homocysteine + H(+). In terms of biological role, catalyzes the last two steps in the biosynthesis of 5-methylaminomethyl-2-thiouridine (mnm(5)s(2)U) at the wobble position (U34) in tRNA. Catalyzes the FAD-dependent demodification of cmnm(5)s(2)U34 to nm(5)s(2)U34, followed by the transfer of a methyl group from S-adenosyl-L-methionine to nm(5)s(2)U34, to form mnm(5)s(2)U34. The chain is tRNA 5-methylaminomethyl-2-thiouridine biosynthesis bifunctional protein MnmC from Haemophilus influenzae (strain 86-028NP).